Reading from the N-terminus, the 149-residue chain is Large ribosomal subunit protein bL9 (149 aa).

It belongs to the bacterial ribosomal protein bL9 family.

Binds to the 23S rRNA. This Legionella pneumophila subsp. pneumophila (strain Philadelphia 1 / ATCC 33152 / DSM 7513) protein is Large ribosomal subunit protein bL9.